We begin with the raw amino-acid sequence, 308 residues long: E3 ubiquitin-protein ligase RING2 (308 aa).

N-acetylserine is present on Ser2. Positions 2–179 (SQAVQTNGTQ…AEDNGDSSHC (178 aa)) are interaction with HIP2. Phosphoserine is present on Ser41. The RING-type zinc finger occupies 51–91 (CPICLDMLKNTMTTKECLHRFCADCIITALRSGNKECPTCR). Positions 93 to 98 (KLVSKR) are interaction with nucleosomes via an acidic patch on histone H2A and histone H2B. Lys112 is covalently cross-linked (Glycyl lysine isopeptide (Lys-Gly) (interchain with G-Cter in ubiquitin)). Ser143 and Ser168 each carry phosphoserine. The interval 157-206 (QRGKKQQIENGSGAEDNGDSSHCSNASTHSNQEAGPSNKRTKTSDDSGLE) is disordered. Polar residues predominate over residues 176–191 (SSHCSNASTHSNQEAG). Residue Lys249 forms a Glycyl lysine isopeptide (Lys-Gly) (interchain with G-Cter in SUMO2) linkage.

Component of chromatin-associated Polycomb (PcG) complexes. Component of a number of PRC1-like complexes; these complexes contain either the polycomb group ring finger protein PCGF1, or PCGF2, or PCGF3, or BMI1, or PCGF5, or PCGF6. Distinct PRC1-like complexes are composed of a RING1 subunit (RING1B or RING1A), one of the six PCGF proteins (PCGF1, PCGF2, PCGF3, BMI1, PCGF5 or PCGF6), one PHC protein (PHC1, PHC2 or PHC3) and one of the CBX proteins (CBX2, CBX4, CBX6, CBX7 or CBX8). Part of a complex that contains RNF2, UB2D3 and BMI1; within that complex RNF2 and BMI1 form a tight heterodimer, where UB2D3 interacts only with RNF2. The complex composed of RNF2, UB2D3 and BMI1 binds nucleosomes, and has activity only with nucleosomal histone H2A. Part of a complex that contains PCGF5, RNF2 and UBE2D3. Part of a complex that contains AUTS2, PCGF5, RNF2, CSNK2B and RYBP. Interacts with CBX6 and CBX8. Interacts with PHC1, PCGF2, RYBP, CBX7, CBX4, CBX2, RNF1/RING1, BMI1 and PHC2. Interaction with RYBP and CBX7 is mutually exclusive; both compete for the same binding site on RNF2. Component of repressive BCOR complex containing a Polycomb group subcomplex at least composed of RYBP, PCGF1, BCOR and RING1. Interacts with CBX2 and PHC1. Interacts with CHTOP. Interacts with AURKB. Part of the E2F6.com-1 complex in G0 phase composed of E2F6, MGA, MAX, TFDP1, CBX3, BAT8, EUHMTASE1, RNF1/RING1, RNF2/RING2, MBLR, L3MBTL2 and YAF2. Component of some MLL1/MLL complex, at least composed of the core components KMT2A/MLL1, ASH2L, HCFC1/HCF1, WDR5 and RBBP5, as well as the facultative components BACC1, CHD8, E2F6, HSP70, INO80C, KANSL1, LAS1L, MAX, MCRS1, MGA, MYST1/MOF, PELP1, PHF20, PRP31, RING2, RUVB1/TIP49A, RUVB2/TIP49B, SENP3, TAF1, TAF4, TAF6, TAF7, TAF9 and TEX10. Interacts with RYBP, HIP2 and TFCP2. Interacts with NUPR1. Interacts with SAMD7 in a PHC2-dependent manner. Monoubiquitinated, by auto-ubiquitination. Polyubiquitinated in the presence of UBE2D3 (in vitro).

It is found in the nucleus. The protein localises to the cytoplasm. Its subcellular location is the chromosome. It catalyses the reaction S-ubiquitinyl-[E2 ubiquitin-conjugating enzyme]-L-cysteine + [acceptor protein]-L-lysine = [E2 ubiquitin-conjugating enzyme]-L-cysteine + N(6)-ubiquitinyl-[acceptor protein]-L-lysine.. It participates in protein modification; protein ubiquitination. Its function is as follows. E3 ubiquitin-protein ligase that mediates monoubiquitination of 'Lys-119' of histone H2A (H2AK119Ub), thereby playing a central role in histone code and gene regulation. H2AK119Ub gives a specific tag for epigenetic transcriptional repression and participates in X chromosome inactivation of female mammals. May be involved in the initiation of both imprinted and random X inactivation. Essential component of a Polycomb group (PcG) multiprotein PRC1-like complex, a complex class required to maintain the transcriptionally repressive state of many genes, including Hox genes, throughout development. PcG PRC1 complex acts via chromatin remodeling and modification of histones, rendering chromatin heritably changed in its expressibility. E3 ubiquitin-protein ligase activity is enhanced by BMI1/PCGF4. Acts as the main E3 ubiquitin ligase on histone H2A of the PRC1 complex, while RING1 may rather act as a modulator of RNF2/RING2 activity. Plays a role in the transcriptional repression of genes that are required for pluripotency in embryonic stem cells, thereby contributing to differentiation of the ectodermal and endodermal germ layers. Association with the chromosomal DNA is cell-cycle dependent. In resting B- and T-lymphocytes, interaction with AURKB leads to block its activity, thereby maintaining transcription in resting lymphocytes. Also acts as a negative regulator of autophagy by mediating ubiquitination of AMBRA1, leading to its subsequent degradation. In Rattus norvegicus (Rat), this protein is E3 ubiquitin-protein ligase RING2 (Rnf2).